A 20-amino-acid chain; its full sequence is Non-specific lipid-transfer protein (20 aa).

Belongs to the plant LTP family.

Plant non-specific lipid-transfer proteins transfer phospholipids as well as galactolipids across membranes. May play a role in wax or cutin deposition in the cell walls of expanding epidermal cells and certain secretory tissues. The protein is Non-specific lipid-transfer protein of Citrus sinensis (Sweet orange).